A 249-amino-acid chain; its full sequence is Mannose-binding protein A (249 aa).

A signal peptide spans 1 to 20 (MLLFSSLPVLLLCVVTASYS). A disordered region spans residues 41–102 (VTNGTPGRDG…KGDPGDTSGV (62 aa)). Basic and acidic residues predominate over residues 48–60 (RDGRDGPKGEKGE). Proline 54 carries the post-translational modification 4-hydroxyproline. 5-hydroxylysine is present on residues lysine 55 and lysine 58. O-linked (Gal...) hydroxylysine glycosylation is found at lysine 55 and lysine 58. 4-hydroxyproline occurs at positions 61, 72, 78, and 89. The 35-residue stretch at 64–98 (GFRGSQGPPGKMGPPGNIGETGPLGPKGQKGDPGD) folds into the Collagen-like domain. Residues lysine 90 and lysine 93 each carry the 5-hydroxylysine modification. Lysine 90 and lysine 93 each carry an O-linked (Gal...) hydroxylysine glycan. Residues 135-246 (SRKKLYVTNG…CSSSFLAVCE (112 aa)) form the C-type lectin domain. Cystine bridges form between cysteine 156–cysteine 245 and cysteine 223–cysteine 237. The Ca(2+) site is built by aspartate 189, glutamate 193, glutamate 213, asparagine 215, aspartate 216, glutamate 221, aspartate 222, asparagine 233, and aspartate 234. The segment at 213 to 221 (EPNDHGSGE) is calcium-dependent carbohydrate binding.

As to quaternary structure, interacts with MASP1 and MASP2. Forms oligomeric complexes of 3, 4, 5 or, predominantly, 6 homotrimers. The homotrimers appear as globular heads that are connected to a central hub by thin stalks. In terms of processing, hydroxylated on lysine and proline residues within the collagen-like domain. Post-translationally, O-glycosylated. O-linked glycans on hydroxylysine residues consist of Glc-Gal disaccharides bound to the oxygen atom of post-translationally added hydroxyl groups. In terms of tissue distribution, detected in blood serum (at protein level). Expressed in liver. Weakly expressed in lung, testis and brain. Not detected in bone marrow and heart.

Its subcellular location is the secreted. Calcium-dependent lectin. Plays a role in the innate immune response by binding mannose, fucose and N-acetylglucosamine on bacteria, including strains of A.suis, H.parasuis and A.pleuropneumoniae, and activates the lectin complement pathway. According to some authors, it only binds mannose. The polypeptide is Mannose-binding protein A (Sus scrofa (Pig)).